The following is a 419-amino-acid chain: Glucose-1-phosphate adenylyltransferase (419 aa).

Alpha-D-glucose 1-phosphate-binding positions include tyrosine 107, glycine 172, 187–188 (EK), and serine 205.

This sequence belongs to the bacterial/plant glucose-1-phosphate adenylyltransferase family. As to quaternary structure, homotetramer.

It catalyses the reaction alpha-D-glucose 1-phosphate + ATP + H(+) = ADP-alpha-D-glucose + diphosphate. It functions in the pathway glycan biosynthesis; glycogen biosynthesis. Functionally, involved in the biosynthesis of ADP-glucose, a building block required for the elongation reactions to produce glycogen. Catalyzes the reaction between ATP and alpha-D-glucose 1-phosphate (G1P) to produce pyrophosphate and ADP-Glc. The polypeptide is Glucose-1-phosphate adenylyltransferase (Novosphingobium aromaticivorans (strain ATCC 700278 / DSM 12444 / CCUG 56034 / CIP 105152 / NBRC 16084 / F199)).